Here is a 1706-residue protein sequence, read N- to C-terminus: DDT domain-containing protein PTM (1706 aa).

The span at 1-16 (MEAKVPRPRGRPRKRQ) shows a compositional bias: basic residues. Disordered stretches follow at residues 1–27 (MEAKVPRPRGRPRKRQRLEDDNRKLNN) and 144–168 (VTNSEDGDSYSDSESSESGDKRGSD). The short motif at 9–18 (RGRPRKRQRL) is the Nuclear localization signal element. Positions 148–160 (EDGDSYSDSESSE) are enriched in acidic residues. The 61-residue stretch at 192–252 (EEAVAHLLSV…LRALKGHLER (61 aa)) folds into the DDT domain. Over residues 375–393 (YKEKEVTDSSTNESKDLDS) the composition is skewed to basic and acidic residues. Positions 375 to 408 (YKEKEVTDSSTNESKDLDSRCTNGGSNEVSSDLD) are disordered. Polar residues predominate over residues 394-408 (RCTNGGSNEVSSDLD). Residues 411-458 (SDECRICGMDGTLLCCDGCPLAYHSRCIGVVKMYIPDGPWFCPECTIN) form a PHD-type 1 zinc finger. Disordered regions lie at residues 1165-1194 (KPPSQQLSSQKPRENTSGVKQVTPDSSVSK) and 1311-1345 (TNQKQRQGNSGLDSDSERMSEQKDSKPSTPLPATP). Composition is skewed to polar residues over residues 1167-1194 (PSQQLSSQKPRENTSGVKQVTPDSSVSK) and 1311-1323 (TNQKQRQGNSGLD). The span at 1325–1336 (DSERMSEQKDSK) shows a compositional bias: basic and acidic residues. The next 5 membrane-spanning stretches (helical) occupy residues 1539–1559 (ALGSITLGSFGAITQFKSILP), 1569–1589 (LAGPFAGAALSVSMFAVGLFL), 1596–1616 (ANDLVQVPSMLFQGSLLLGLI), 1624–1644 (AALHAATVSIHPLVIAGWCGL), and 1682–1702 (MLGLRVLGGPLALPWGLYVLI).

Interacts (via the DDT domain) with CHR11 (via C-terminus).

The protein localises to the plastid. It localises to the chloroplast outer membrane. It is found in the nucleus. In terms of biological role, membrane-bound transcription factor required for the plastid-to-nucleus retrograde signaling. Functions in multiple retrograde pathways. The plastid-to-nucleus signal plays an important role in the coordinated expression of both nuclear- and chloroplast-localized genes that encode photosynthesis-related proteins. In the nucleus, activates ABI4 transcription in a PHD-dependent manner associated with histone modifications. Localized primarily in the chloroplast outer membrane as dormant form and, in response to retrograde signals, is released from the membrane through proteolytic cleavage and its cleaved fragment containing the transcription factor domain is redistributed to the nucleus, where it regulates the expression of particular nuclear genes. This chain is DDT domain-containing protein PTM, found in Arabidopsis thaliana (Mouse-ear cress).